The chain runs to 371 residues: Glutamate 5-kinase (371 aa).

ATP is bound at residue Lys-10. Ser-50, Asp-137, and Asn-149 together coordinate substrate. Residues 169–170 (SD) and 208–214 (TGGMFTK) each bind ATP. The PUA domain occupies 274 to 352 (EGRIYIDDGA…EEIRNILGED (79 aa)).

Belongs to the glutamate 5-kinase family.

The protein resides in the cytoplasm. It catalyses the reaction L-glutamate + ATP = L-glutamyl 5-phosphate + ADP. It functions in the pathway amino-acid biosynthesis; L-proline biosynthesis; L-glutamate 5-semialdehyde from L-glutamate: step 1/2. Functionally, catalyzes the transfer of a phosphate group to glutamate to form L-glutamate 5-phosphate. The chain is Glutamate 5-kinase from Dictyoglomus turgidum (strain DSM 6724 / Z-1310).